Consider the following 477-residue polypeptide: FAD-dependent monooxygenase paxM (477 aa).

Residues 4–24 (AEFQVIIVGGSIGGLTLAHCL) traverse the membrane as a helical segment. 3 residues coordinate FAD: E35, G49, and R108. R195 is a catalytic residue. FAD contacts are provided by D308 and A321. A helical transmembrane segment spans residues 446–466 (LMIYLFGLTIVYTSLTMMFDL).

The protein belongs to the paxM FAD-dependent monooxygenase family. Requires FAD as cofactor.

It localises to the membrane. It functions in the pathway secondary metabolite biosynthesis. Functionally, FAD-dependent monooxygenase; part of the gene cluster that mediates the biosynthesis of paxilline, a mycotoxin that acts as an inhibitor of mammalian maxi-K channels. PaxG, the geranylgeranyl diphosphate (GGPP) synthase is proposed to catalyze the first step in paxilline biosynthesis. Condensation of indole-3-glycerol phosphate with GGPP by paxC then forms 3-geranylgeranylindole (3-GGI), followed by epoxidation and cyclization of this intermediate (by paxM and paxB) to form paspaline. Paspaline is subsequently converted to 13-desoxypaxilline by paxP, the latter being then converted to paxilline by paxQ. Finally paxilline can be mono- and di-prenylated by paxD. The protein is FAD-dependent monooxygenase paxM of Penicillium paxilli.